Consider the following 152-residue polypeptide: NADH-quinone oxidoreductase subunit I 1 (152 aa).

4Fe-4S ferredoxin-type domains lie at 53-83 and 94-123; these read MKLG…MKSD and VTYV…LGTG. Residues cysteine 63, cysteine 66, cysteine 69, cysteine 73, cysteine 103, cysteine 106, cysteine 109, and cysteine 113 each contribute to the [4Fe-4S] cluster site.

This sequence belongs to the complex I 23 kDa subunit family. In terms of assembly, NDH-1 is composed of 14 different subunits. Subunits NuoA, H, J, K, L, M, N constitute the membrane sector of the complex. It depends on [4Fe-4S] cluster as a cofactor.

It localises to the cell inner membrane. The enzyme catalyses a quinone + NADH + 5 H(+)(in) = a quinol + NAD(+) + 4 H(+)(out). Functionally, NDH-1 shuttles electrons from NADH, via FMN and iron-sulfur (Fe-S) centers, to quinones in the respiratory chain. The immediate electron acceptor for the enzyme in this species is believed to be ubiquinone. Couples the redox reaction to proton translocation (for every two electrons transferred, four hydrogen ions are translocated across the cytoplasmic membrane), and thus conserves the redox energy in a proton gradient. The protein is NADH-quinone oxidoreductase subunit I 1 of Koribacter versatilis (strain Ellin345).